A 361-amino-acid polypeptide reads, in one-letter code: Phosphate acyltransferase (361 aa).

It belongs to the PlsX family. In terms of assembly, homodimer. Probably interacts with PlsY.

Its subcellular location is the cytoplasm. It catalyses the reaction a fatty acyl-[ACP] + phosphate = an acyl phosphate + holo-[ACP]. It participates in lipid metabolism; phospholipid metabolism. Catalyzes the reversible formation of acyl-phosphate (acyl-PO(4)) from acyl-[acyl-carrier-protein] (acyl-ACP). This enzyme utilizes acyl-ACP as fatty acyl donor, but not acyl-CoA. This Parvibaculum lavamentivorans (strain DS-1 / DSM 13023 / NCIMB 13966) protein is Phosphate acyltransferase.